The sequence spans 222 residues: MFGFRKPKMYRSIEGCCICRAKSSSSRFTDSKRYEKDFQNCFGLHEARSGDICNACVLLVKRWKKLPAGSKKNWNHVVDARAGPSLKTTLKPKKMKTLSGSRIKSNQISKLQKEFKRHNSDAHSTTSSASPAQSPCYSNQSDEGSDTEMSAGSSRTPVFSFLDLTYWKRQKVCCGIIYKGRFGEVLIDTHLFKPCCSNKKSATEKPEQEGPQSPAISTQEEW.

Positions 111 to 121 (LQKEFKRHNSD) are enriched in basic and acidic residues. Disordered regions lie at residues 111-154 (LQKE…AGSS) and 199-222 (KKSA…QEEW). Low complexity predominate over residues 124–135 (STTSSASPAQSP). 2 stretches are compositionally biased toward polar residues: residues 136–154 (CYSN…AGSS) and 210–222 (GPQS…QEEW).

The protein belongs to the SINHCAF family. In terms of assembly, component of the Sin3/HDAC corepressor complex at least composed of BRMS1, BRMS1L, ING2, SAP30, SAP30L, HDAC1. Found in a complex composed of at least SINHCAF, SIN3A, HDAC1, SAP30, RBBP4, OGT and TET1.

The protein resides in the nucleus. Its function is as follows. Subunit of the Sin3 deacetylase complex (Sin3/HDAC), this subunit is important for the repression of genes encoding components of the TGF-beta signaling pathway. Core component of a SIN3A complex (composed of at least SINHCAF, SIN3A, HDAC1, SAP30, RBBP4, OGT and TET1) present in embryonic stem (ES) cells and is essential to maintain the complex on chromatin. This Gallus gallus (Chicken) protein is SIN3-HDAC complex-associated factor (SINHCAF).